Consider the following 1409-residue polypeptide: DNA-directed RNA polymerase subunit beta' (1409 aa).

Positions 70, 72, 85, and 88 each coordinate Zn(2+). Mg(2+) contacts are provided by Asp461, Asp463, and Asp465. Residues Cys820, Cys894, Cys901, and Cys904 each contribute to the Zn(2+) site.

Belongs to the RNA polymerase beta' chain family. As to quaternary structure, the RNAP catalytic core consists of 2 alpha, 1 beta, 1 beta' and 1 omega subunit. When a sigma factor is associated with the core the holoenzyme is formed, which can initiate transcription. It depends on Mg(2+) as a cofactor. Zn(2+) serves as cofactor.

The enzyme catalyses RNA(n) + a ribonucleoside 5'-triphosphate = RNA(n+1) + diphosphate. Functionally, DNA-dependent RNA polymerase catalyzes the transcription of DNA into RNA using the four ribonucleoside triphosphates as substrates. The chain is DNA-directed RNA polymerase subunit beta' from Ralstonia nicotianae (strain ATCC BAA-1114 / GMI1000) (Ralstonia solanacearum).